Here is a 382-residue protein sequence, read N- to C-terminus: Chaperone protein DnaJ (382 aa).

The J domain maps to 5-70 (DYYEVLGVSR…DKKAAYDRYG (66 aa)). A CR-type zinc finger spans residues 141-219 (GVQKTINVPA…CHGAGRVEKE (79 aa)). Positions 154, 157, 171, 174, 193, 196, 207, and 210 each coordinate Zn(2+). CXXCXGXG motif repeat units lie at residues 154 to 161 (CDSCKGTG), 171 to 178 (CPTCSGMG), 193 to 200 (CPTCNGMG), and 207 to 214 (CKSCHGAG).

This sequence belongs to the DnaJ family. In terms of assembly, homodimer. It depends on Zn(2+) as a cofactor.

It localises to the cytoplasm. In terms of biological role, participates actively in the response to hyperosmotic and heat shock by preventing the aggregation of stress-denatured proteins and by disaggregating proteins, also in an autonomous, DnaK-independent fashion. Unfolded proteins bind initially to DnaJ; upon interaction with the DnaJ-bound protein, DnaK hydrolyzes its bound ATP, resulting in the formation of a stable complex. GrpE releases ADP from DnaK; ATP binding to DnaK triggers the release of the substrate protein, thus completing the reaction cycle. Several rounds of ATP-dependent interactions between DnaJ, DnaK and GrpE are required for fully efficient folding. Also involved, together with DnaK and GrpE, in the DNA replication of plasmids through activation of initiation proteins. The sequence is that of Chaperone protein DnaJ from Cereibacter sphaeroides (strain ATCC 17025 / ATH 2.4.3) (Rhodobacter sphaeroides).